The following is a 105-amino-acid chain: Transcription factor S (105 aa).

Zn(2+) is bound by residues Cys5, Cys8, Cys21, Cys24, Cys66, Cys69, Cys94, and Cys97. The C4-type zinc finger occupies 5-24 (CPKCNNIMLPKNGRLKCTVC). A TFIIS-type zinc finger spans residues 62 to 102 (TRIECPSCGNMEASWWLQQTRCADEPETRFYKCKKCGHTWR).

Belongs to the archaeal RpoM/eukaryotic RPA12/RPB9/RPC11 RNA polymerase family.

Induces RNA cleavage activity in the RNA polymerase. In its presence, the cleavage activity of the RNA polymerase truncates the RNA back to position +15 in a stepwise manner by releasing mainly dinucleotides from the 3'-end of the nascent RNA. The truncated RNAs are able to continue elongation. Involved in transcriptional proofreading and fidelity. Misincorporation of nucleotides during elongation of transcription leads to arrested elongation complexes which are rescued by TFS-promoted removal of a dinucleotide from the 3'-end. TFS is able to induce a cleavage resynthesis cycle in stalled elongation complexes (resulting from the next missing nucleotide or a reduced incorporation rate of a wrong nucleotide) preventing misincorporation and enabling proofreading in a post-incorporation manner. Pausing of elongation complexes is the main determinant of TFS-induced RNA cleavage. The polypeptide is Transcription factor S (Methanothermococcus thermolithotrophicus (Methanococcus thermolithotrophicus)).